The primary structure comprises 676 residues: SPARC-like protein 1 (676 aa).

An N-terminal signal peptide occupies residues 1–16; it reads MKTVLLLICLLGSAFT. Basic and acidic residues predominate over residues 35–44; that stretch reads EKHKYTHSEM. 3 disordered regions span residues 35–151, 173–369, and 385–437; these read EKHK…WALR, NTVG…GVYR, and SEDN…RNST. Over residues 95-108 the composition is skewed to polar residues; it reads KNSLRSINFLTLHS. The N-linked (GlcNAc...) asparagine glycan is linked to Asn-182. A compositionally biased stretch (acidic residues) spans 184–202; that stretch reads SEEEEAGEEEDEEWGEETD. Basic and acidic residues-rich tracts occupy residues 249 to 266 and 273 to 291; these read EKFSMEEESQEKLYKEGK and NHNEDQGEKRQSEESKEHF. Acidic residues predominate over residues 312-328; it reads NAEEDDNDSGDDGEEDL. An N-linked (GlcNAc...) asparagine glycan is attached at Asn-318. Basic and acidic residues predominate over residues 385-394; the sequence is SEDNHYHHEP. An N-linked (GlcNAc...) asparagine glycan is attached at Asn-396. Over residues 397 to 408 the composition is skewed to low complexity; the sequence is SSSKQQLQTSSS. Asn-413 carries an N-linked (GlcNAc...) asparagine glycan. The span at 415-433 shows a compositional bias: basic and acidic residues; sequence TEHEDEVKTTGGSYHEESA. Asn-435 is a glycosylation site (N-linked (GlcNAc...) asparagine). A Follistatin-like domain is found at 444-466; the sequence is LCRNFHCKRGKVCQADKQGKPSC. Cystine bridges form between Cys-445-Cys-456, Cys-450-Cys-466, Cys-468-Cys-502, Cys-474-Cys-495, Cys-484-Cys-521, Cys-527-Cys-638, and Cys-646-Cys-662. Residues 462-523 form the Kazal-like domain; that stretch reads GKPSCICQDP…HLDYMGACKH (62 aa). Asn-488 carries an N-linked (GlcNAc...) asparagine glycan. An EF-hand domain is found at 634–669; the sequence is PMEHCITRFFQECDGDQDKLITLKEWCHCFAIKEED. The Ca(2+) site is built by Asp-647, Asp-649, Asp-651, and Glu-658.

It belongs to the SPARC family. As to expression, glial (Mueller) cells of the neuroretina.

It is found in the secreted. It localises to the extracellular space. The protein resides in the extracellular matrix. Functionally, could play a role in the late stage of neuroretina morphogenesis. In Coturnix japonica (Japanese quail), this protein is SPARC-like protein 1 (SPARCL1).